The following is a 524-amino-acid chain: Na(+)/H(+) antiporter NhaG (524 aa).

11 helical membrane-spanning segments follow: residues 6 to 26 (LHHIFELGFFVVMIAAGITAI), 33 to 53 (PYPIALVIVGTIIGLVHIPLF), 59 to 79 (FITEGEVFNFVIITLFLPALL), 98 to 118 (VLALFGGTLISFLIVGFSSMW), 126 to 146 (AAFVFAALMSATDPVSVLSIF), 169 to 189 (LAVVLFNISAFYLMTYLDLGI), 193 to 213 (GLGLWEFVKVISLGLIIGGVL), 242 to 262 (FLLAEMAGASGVIAVVVAALI), 283 to 303 (FWDVAALLANSLVFLMVGLEI), 312 to 332 (WGLAIMAIVIVLIARSAAVYI), and 374 to 394 (DILVFAFSVVLFSLVVQGLTI).

This sequence belongs to the monovalent cation:proton antiporter 1 (CPA1) transporter (TC 2.A.36) family.

The protein resides in the cell membrane. Its function is as follows. Na(+)/H(+) antiporter that extrudes sodium in exchange for external protons. Can also transport lithium. This is Na(+)/H(+) antiporter NhaG (nhaG) from Bacillus atrophaeus.